We begin with the raw amino-acid sequence, 385 residues long: MTGASGVEGTRIPLHSLSCRPSAGRSAGSFVNTGIMEAFRGTRPGCLPVWFMRQAGRSLPEYRAVRGTNTLLEACLNPDLACEITLQPVRRYSVDAAILFSDIVVPLKLAGVGVDILPGTGPVLNNPIDTPDRVNTLLAKTADSIDFGIIAEITRHTVSVLNGIPLIGFAGAPYTLACYMVEGGPSKTHMKARAMMHGDKKTWQKVMMLAARLSGQFLAAQITSGAQAVQIFDSWAGSLSRKDYVDNVAPFSKMTIDLACGIDGNSDLSKTGKSLWPRVPVLHFAANAGHLLTAIRDIGVSVMSVDYTKPLDEASELLDDSMPLQGNIDPAMLFAPWEVLKRHVLDIVQRASRAPSHVLNLGHGVPPDASCDQLARIVDLAHSMV.

Residues 53–57 (RQAGR), Asp102, Tyr179, Ser234, and His363 each bind substrate.

This sequence belongs to the uroporphyrinogen decarboxylase family. As to quaternary structure, homodimer.

The protein resides in the cytoplasm. The catalysed reaction is uroporphyrinogen III + 4 H(+) = coproporphyrinogen III + 4 CO2. It functions in the pathway porphyrin-containing compound metabolism; protoporphyrin-IX biosynthesis; coproporphyrinogen-III from 5-aminolevulinate: step 4/4. Its function is as follows. Catalyzes the decarboxylation of four acetate groups of uroporphyrinogen-III to yield coproporphyrinogen-III. The polypeptide is Uroporphyrinogen decarboxylase (Tropheryma whipplei (strain TW08/27) (Whipple's bacillus)).